The sequence spans 246 residues: uncharacterized protein (246 aa).

3 disordered regions span residues 29–54 (SLETDEPTSSSPSLSSNSDVSQENGS), 93–114 (LRRTMSQNSLEYDEEDEKEDKF), and 148–246 (PIPP…SVVI). Residues 35-49 (PTSSSPSLSSNSDVS) are compositionally biased toward low complexity. The segment covering 172–183 (RQQTNNIRTLHV) has biased composition (polar residues). 2 stretches are compositionally biased toward low complexity: residues 190–203 (SSSSGSKTHSPSSS) and 214–225 (SKTTKNRSSNSS). Residue N219 is glycosylated (N-linked (GlcNAc...) asparagine). Over residues 235 to 246 (LTPSPTFESVVI) the composition is skewed to polar residues.

This is an uncharacterized protein from Caenorhabditis elegans.